The sequence spans 101 residues: Urease subunit beta (101 aa).

It belongs to the urease beta subunit family. In terms of assembly, heterotrimer of UreA (gamma), UreB (beta) and UreC (alpha) subunits. Three heterotrimers associate to form the active enzyme.

Its subcellular location is the cytoplasm. It catalyses the reaction urea + 2 H2O + H(+) = hydrogencarbonate + 2 NH4(+). The protein operates within nitrogen metabolism; urea degradation; CO(2) and NH(3) from urea (urease route): step 1/1. This chain is Urease subunit beta, found in Acaryochloris marina (strain MBIC 11017).